The primary structure comprises 465 residues: Histidine--tRNA ligase (465 aa).

The protein belongs to the class-II aminoacyl-tRNA synthetase family. As to quaternary structure, homodimer.

It localises to the cytoplasm. The catalysed reaction is tRNA(His) + L-histidine + ATP = L-histidyl-tRNA(His) + AMP + diphosphate + H(+). This Pelagibacter ubique (strain HTCC1062) protein is Histidine--tRNA ligase (hisS).